Here is a 452-residue protein sequence, read N- to C-terminus: Phosphoglucosamine mutase (452 aa).

Catalysis depends on serine 105, which acts as the Phosphoserine intermediate. Mg(2+)-binding residues include serine 105, aspartate 244, aspartate 246, and aspartate 248. Phosphoserine is present on serine 105.

Belongs to the phosphohexose mutase family. It depends on Mg(2+) as a cofactor. In terms of processing, activated by phosphorylation.

The catalysed reaction is alpha-D-glucosamine 1-phosphate = D-glucosamine 6-phosphate. Functionally, catalyzes the conversion of glucosamine-6-phosphate to glucosamine-1-phosphate. In Blochmanniella floridana, this protein is Phosphoglucosamine mutase.